A 190-amino-acid chain; its full sequence is Protein hunchback (190 aa).

3 disordered regions span residues 13 to 59 (EPMS…SSNL), 86 to 110 (AAMT…PNPM), and 142 to 190 (QTND…KYMA). Residues 17–31 (HHHHHSHHHGHHHML) are compositionally biased toward basic residues. Residues 90–100 (PSPSNNDQNSP) are compositionally biased toward polar residues. Positions 171 to 190 (EPEKDHDLISNSSEDMKYMA) are enriched in basic and acidic residues.

Belongs to the hunchback C2H2-type zinc-finger protein family.

The protein resides in the nucleus. Gap class segmentation protein that controls development of head structures. In Scaptomyza crassifemur (Fruit fly), this protein is Protein hunchback (hb).